The following is a 348-amino-acid chain: Chitinase (348 aa).

A signal peptide spans 1-29; that stretch reads MKLKKIIPAFPLLSTVAVGLWLTPTQASA. The GH18 domain occupies 42–348; that stretch reads KVLVGYWHNW…FATRYSNLVK (307 aa). The active-site Proton donor is the glutamate 161.

It belongs to the glycosyl hydrolase 18 family.

It localises to the secreted. It carries out the reaction Random endo-hydrolysis of N-acetyl-beta-D-glucosaminide (1-&gt;4)-beta-linkages in chitin and chitodextrins.. The protein operates within glycan degradation; chitin degradation. Functionally, involved in chitin degradation. Catalyzes the cleavage of glycosidic linkages in chitooligosaccharides and in alpha- and beta-chitin. Its activity on chitooligosaccharides increases considerably with degrees of polymerization (the initial rate of hydrolysis for GlcNAc5 is about 130-fold higher than that for GlcNAc3). Its activity is greatly stimulated in the presence of the lytic chitin monooxygenase EfCBM33A, which attacks the crystalline structure of chitin and makes the polymer more accessible to the chitinase; combining the two enzymes leads to rapid and complete depolymerization of crystalline chitin, especially with beta-chitin as a substrate. Is likely involved in a chitin degradation pathway that allows E.faecalis V583 to grow on chitin as a carbon source. This is Chitinase from Enterococcus faecalis (strain ATCC 700802 / V583).